The sequence spans 1087 residues: Exportin-7 (1087 aa).

N-acetylalanine is present on A2. Positions 30 to 96 constitute an Importin N-terminal domain; sequence AEKALVEFTN…RNYVLNYLAT (67 aa). S570 bears the Phosphoserine mark.

The protein belongs to the exportin family. In terms of assembly, binds to nucleoporins. Found in a complex with XPO7, EIF4A1, ARHGAP1, VPS26A, VPS29, VPS35 and SFN. Interacts with ARHGAP1 and SFN. Interacts with Ran and cargo proteins in a GTP-dependent manner. As to expression, highly expressed in testis and spleen, moderate in kidney and liver and low in heart, brain, lung and skeletal muscle.

Its subcellular location is the cytoplasm. The protein localises to the nucleus. In terms of biological role, mediates the nuclear export of proteins (cargos) with broad substrate specificity. In the nucleus binds cooperatively to its cargo and to the GTPase Ran in its active GTP-bound form. Docking of this trimeric complex to the nuclear pore complex (NPC) is mediated through binding to nucleoporins. Upon transit of a nuclear export complex into the cytoplasm, disassembling of the complex and hydrolysis of Ran-GTP to Ran-GDP (induced by RANBP1 and RANGAP1, respectively) cause release of the cargo from the export receptor. XPO7 then return to the nuclear compartment and mediate another round of transport. The directionality of nuclear export is thought to be conferred by an asymmetric distribution of the GTP- and GDP-bound forms of Ran between the cytoplasm and nucleus. The chain is Exportin-7 (Xpo7) from Mus musculus (Mouse).